A 78-amino-acid polypeptide reads, in one-letter code: UPF0335 protein RP113 (78 aa).

This sequence belongs to the UPF0335 family.

This Rickettsia prowazekii (strain Madrid E) protein is UPF0335 protein RP113.